The chain runs to 234 residues: N-(5'-phosphoribosyl)anthranilate isomerase 1 (234 aa).

It belongs to the TrpF family.

It catalyses the reaction N-(5-phospho-beta-D-ribosyl)anthranilate = 1-(2-carboxyphenylamino)-1-deoxy-D-ribulose 5-phosphate. Its pathway is amino-acid biosynthesis; L-tryptophan biosynthesis; L-tryptophan from chorismate: step 3/5. This Methanosarcina mazei (strain ATCC BAA-159 / DSM 3647 / Goe1 / Go1 / JCM 11833 / OCM 88) (Methanosarcina frisia) protein is N-(5'-phosphoribosyl)anthranilate isomerase 1 (trpF1).